Here is a 203-residue protein sequence, read N- to C-terminus: Outer-membrane lipoprotein carrier protein (203 aa).

Residues 1-21 (MKKIAITCALLSSLVASSVWA) form the signal peptide.

The protein belongs to the LolA family. Monomer.

It localises to the periplasm. Functionally, participates in the translocation of lipoproteins from the inner membrane to the outer membrane. Only forms a complex with a lipoprotein if the residue after the N-terminal Cys is not an aspartate (The Asp acts as a targeting signal to indicate that the lipoprotein should stay in the inner membrane). The polypeptide is Outer-membrane lipoprotein carrier protein (Escherichia coli O139:H28 (strain E24377A / ETEC)).